The primary structure comprises 299 residues: UTP--glucose-1-phosphate uridylyltransferase (299 aa).

It belongs to the UDPGP type 2 family.

It carries out the reaction alpha-D-glucose 1-phosphate + UTP + H(+) = UDP-alpha-D-glucose + diphosphate. It functions in the pathway carbohydrate metabolism; nucleotide-sugar metabolism. The protein operates within capsule biogenesis; capsule polysaccharide biosynthesis. This Streptococcus pneumoniae serotype 4 (strain ATCC BAA-334 / TIGR4) protein is UTP--glucose-1-phosphate uridylyltransferase (cap4C).